A 91-amino-acid polypeptide reads, in one-letter code: uncharacterized protein (91 aa).

A helical membrane pass occupies residues 7–23 (IALVGVVVVLFGALRYQ).

It is found in the membrane. This is an uncharacterized protein from Haemophilus influenzae (strain ATCC 51907 / DSM 11121 / KW20 / Rd).